Here is a 508-residue protein sequence, read N- to C-terminus: MSSNLAASRRSSSSSSVAAAAAAKRPAVGEGGGGGGGKAAAGAAAAKKRVALSNISNVAAGGGAPGKAGNAKLNLAASAAPVKKGSLASGRNVGTNRASAVKSASAKPAPAISRHESATQKESVLPPKVPSIVPTAALAPVTVPCSSFVSPMHSGDSVSVDETMSTCDSMKSPEFEYIDNGDSSSVLGSLQRRANENLRISEDRDVEETKWKKDAPSPMEIDQICDVDNNYEDPQLCATLASDIYMHLREAETRKRPSTDFMETIQKDVNPSMRAILIDWLVEVAEEYRLVPDTLYLTVNYIDRYLSGNEINRQRLQLLGVACMLIAAKYEEICAPQVEEFCYITDNTYFRDEVLEMEASVLNYLKFEVTAPTAKCFLRRFVRVAQVSDEDPALHLEFLANYVAELSLLEYNLLSYPPSLVAASAIFLAKFILQPTKHPWNSTLAHYTQYKSSELSDCVKALHRLFSVGPGSNLPAIREKYTQHKYKFVAKKPCPPSIPTEFFRDATC.

Positions 1 to 28 (MSSNLAASRRSSSSSSVAAAAAAKRPAV) are enriched in low complexity. Disordered regions lie at residues 1 to 40 (MSSNLAASRRSSSSSSVAAAAAAKRPAVGEGGGGGGGKAA) and 82 to 125 (VKKG…ESVL). Over residues 29–39 (GEGGGGGGGKA) the composition is skewed to gly residues. The segment covering 98-111 (ASAVKSASAKPAPA) has biased composition (low complexity).

It belongs to the cyclin family. Cyclin AB subfamily. In terms of tissue distribution, expressed in the dividing region of the root cap and root apex. Expressed in the intercalary meristem of internodes and in adventitious roots under submergence conditions.

Its function is as follows. Involved in the control of the cell cycle at the G2/M (mitosis) transition. This Oryza sativa subsp. japonica (Rice) protein is Cyclin-A1-1 (CYCA1-1).